We begin with the raw amino-acid sequence, 417 residues long: Gamma-glutamyl phosphate reductase (417 aa).

Belongs to the gamma-glutamyl phosphate reductase family.

It localises to the cytoplasm. It carries out the reaction L-glutamate 5-semialdehyde + phosphate + NADP(+) = L-glutamyl 5-phosphate + NADPH + H(+). The protein operates within amino-acid biosynthesis; L-proline biosynthesis; L-glutamate 5-semialdehyde from L-glutamate: step 2/2. Its function is as follows. Catalyzes the NADPH-dependent reduction of L-glutamate 5-phosphate into L-glutamate 5-semialdehyde and phosphate. The product spontaneously undergoes cyclization to form 1-pyrroline-5-carboxylate. This chain is Gamma-glutamyl phosphate reductase, found in Legionella pneumophila subsp. pneumophila (strain Philadelphia 1 / ATCC 33152 / DSM 7513).